The primary structure comprises 247 residues: Pyridoxine 5'-phosphate synthase (247 aa).

3-amino-2-oxopropyl phosphate is bound at residue N12. A 1-deoxy-D-xylulose 5-phosphate-binding site is contributed by 14–15 (DH). Position 23 (R23) interacts with 3-amino-2-oxopropyl phosphate. Residue H48 is the Proton acceptor of the active site. 1-deoxy-D-xylulose 5-phosphate is bound by residues R50 and H55. E75 serves as the catalytic Proton acceptor. T105 provides a ligand contact to 1-deoxy-D-xylulose 5-phosphate. The active-site Proton donor is H196. Residues G197 and 218-219 (GH) each bind 3-amino-2-oxopropyl phosphate.

This sequence belongs to the PNP synthase family. As to quaternary structure, homooctamer; tetramer of dimers.

It is found in the cytoplasm. It catalyses the reaction 3-amino-2-oxopropyl phosphate + 1-deoxy-D-xylulose 5-phosphate = pyridoxine 5'-phosphate + phosphate + 2 H2O + H(+). Its pathway is cofactor biosynthesis; pyridoxine 5'-phosphate biosynthesis; pyridoxine 5'-phosphate from D-erythrose 4-phosphate: step 5/5. Its function is as follows. Catalyzes the complicated ring closure reaction between the two acyclic compounds 1-deoxy-D-xylulose-5-phosphate (DXP) and 3-amino-2-oxopropyl phosphate (1-amino-acetone-3-phosphate or AAP) to form pyridoxine 5'-phosphate (PNP) and inorganic phosphate. This chain is Pyridoxine 5'-phosphate synthase, found in Pseudomonas fluorescens (strain Pf0-1).